A 320-amino-acid polypeptide reads, in one-letter code: Cytochrome f (320 aa).

An N-terminal signal peptide occupies residues 1–35; sequence MENRNTFSWVKEQITRSISVSIMIYVITRTSISNA. Residues Y36, C56, C59, and H60 each contribute to the heme site. The chain crosses the membrane as a helical span at residues 286–306; sequence VQGLLFFFASVILAQVFLVLK.

Belongs to the cytochrome f family. In terms of assembly, the 4 large subunits of the cytochrome b6-f complex are cytochrome b6, subunit IV (17 kDa polypeptide, petD), cytochrome f and the Rieske protein, while the 4 small subunits are PetG, PetL, PetM and PetN. The complex functions as a dimer. Requires heme as cofactor.

The protein resides in the plastid. It is found in the chloroplast thylakoid membrane. Component of the cytochrome b6-f complex, which mediates electron transfer between photosystem II (PSII) and photosystem I (PSI), cyclic electron flow around PSI, and state transitions. In Hordeum vulgare (Barley), this protein is Cytochrome f.